A 120-amino-acid polypeptide reads, in one-letter code: 2-amino-4-hydroxy-6-hydroxymethyldihydropteridine pyrophosphokinase (120 aa).

Belongs to the HPPK family.

It catalyses the reaction 6-hydroxymethyl-7,8-dihydropterin + ATP = (7,8-dihydropterin-6-yl)methyl diphosphate + AMP + H(+). It participates in cofactor biosynthesis; tetrahydrofolate biosynthesis; 2-amino-4-hydroxy-6-hydroxymethyl-7,8-dihydropteridine diphosphate from 7,8-dihydroneopterin triphosphate: step 4/4. Its function is as follows. Catalyzes the transfer of pyrophosphate from adenosine triphosphate (ATP) to 6-hydroxymethyl-7,8-dihydropterin, an enzymatic step in folate biosynthesis pathway. The polypeptide is 2-amino-4-hydroxy-6-hydroxymethyldihydropteridine pyrophosphokinase (folK) (Pseudomonas putida (Arthrobacter siderocapsulatus)).